Here is a 275-residue protein sequence, read N- to C-terminus: Large ribosomal subunit protein uL2c (275 aa).

The disordered stretch occupies residues threonine 219–serine 267. Over residues leucine 255–lysine 264 the composition is skewed to basic residues.

Belongs to the universal ribosomal protein uL2 family. Part of the 50S ribosomal subunit.

It localises to the plastid. The protein localises to the chloroplast. The sequence is that of Large ribosomal subunit protein uL2c (rpl2) from Thalassiosira pseudonana (Marine diatom).